Here is a 122-residue protein sequence, read N- to C-terminus: Large ribosomal subunit protein uL18 (122 aa).

Belongs to the universal ribosomal protein uL18 family. Part of the 50S ribosomal subunit; part of the 5S rRNA/L5/L18/L25 subcomplex. Contacts the 5S and 23S rRNAs.

Its function is as follows. This is one of the proteins that bind and probably mediate the attachment of the 5S RNA into the large ribosomal subunit, where it forms part of the central protuberance. The sequence is that of Large ribosomal subunit protein uL18 from Prochlorococcus marinus (strain MIT 9215).